The chain runs to 303 residues: Putative S-adenosyl-L-methionine-dependent methyltransferase MSMEG_1479/MSMEI_1443 (303 aa).

Residues Asp-130 and 159-160 (DL) contribute to the S-adenosyl-L-methionine site.

The protein belongs to the UPF0677 family.

Its function is as follows. Exhibits S-adenosyl-L-methionine-dependent methyltransferase activity. This Mycolicibacterium smegmatis (strain ATCC 700084 / mc(2)155) (Mycobacterium smegmatis) protein is Putative S-adenosyl-L-methionine-dependent methyltransferase MSMEG_1479/MSMEI_1443.